Here is a 593-residue protein sequence, read N- to C-terminus: Methionine--tRNA ligase (593 aa).

Residues 7-17 carry the 'HIGH' region motif; the sequence is PYANGPRHIGH. Positions 139, 142, 152, and 155 each coordinate Zn(2+). The 'KMSKS' region signature appears at 343 to 347; sequence KFSTS. Residue Thr-346 coordinates ATP.

The protein belongs to the class-I aminoacyl-tRNA synthetase family. MetG type 1 subfamily. In terms of assembly, monomer. The cofactor is Zn(2+).

The protein localises to the cytoplasm. The enzyme catalyses tRNA(Met) + L-methionine + ATP = L-methionyl-tRNA(Met) + AMP + diphosphate. Is required not only for elongation of protein synthesis but also for the initiation of all mRNA translation through initiator tRNA(fMet) aminoacylation. The chain is Methionine--tRNA ligase from Saccharopolyspora erythraea (strain ATCC 11635 / DSM 40517 / JCM 4748 / NBRC 13426 / NCIMB 8594 / NRRL 2338).